A 78-amino-acid polypeptide reads, in one-letter code: Transmembrane protein 258 (78 aa).

The Cytoplasmic portion of the chain corresponds to 1 to 18 (MDVMQRYVSPVNPAVFPH). Residues 19–39 (LATVLLVIGTFFTAWFFIFVV) form a helical membrane-spanning segment. Over 40–53 (SRKSSKESTLIKEL) the chain is Cytoplasmic. Residues 54 to 74 (LISLCASIFLGFGIVFLLLTV) traverse the membrane as a helical segment. Residues 75–78 (GIYV) lie on the Perinuclear space side of the membrane.

Belongs to the OST5 family. In terms of assembly, homodimer. Component of the oligosaccharyltransferase (OST) complex. Interacts with klar and Msp300, components of LINC complex.

The protein localises to the nucleus outer membrane. It localises to the cytoplasm. The protein resides in the endoplasmic reticulum membrane. Subunit of the oligosaccharyl transferase (OST) complex that catalyzes the initial transfer of a defined glycan (Glc(3)Man(9)GlcNAc(2) in eukaryotes) from the lipid carrier dolichol-pyrophosphate to an asparagine residue within an Asn-X-Ser/Thr consensus motif in nascent polypeptide chains, the first step in protein N-glycosylation. N-glycosylation occurs cotranslationally and the complex associates with the Sec61 complex at the channel-forming translocon complex that mediates protein translocation across the endoplasmic reticulum (ER). All subunits are required for a maximal enzyme activity. In addition may regulates nuclear envelope (NE) architecture and nuclear positioning through the linker of nucleoskeleton and cytoskeleton (LINC)-dependent and -independent mechanisms. The chain is Transmembrane protein 258 from Drosophila melanogaster (Fruit fly).